A 229-amino-acid polypeptide reads, in one-letter code: MAEESYDEECDYLFKAVLIGDSAVGKSNLLSRFSRDEFRLDSKPTIGVDFAYRNVRVGDKTIKAQIWDTAGQERFRAITSSYYRGALGALLIYDITRRITFKNIEKWLSELRGFSSPETVVVLVGNKSDLGQSREVEEEEGKTLAESEGLYFLETSALENQNVEEAFLSMIGRIHEVLTQKIVLDNRLNGDGNNESNGAVVPPGKEIVNIHEVTATRPLSTSLSNCCYK.

Position 20 to 27 (20 to 27 (GDSAVGKS)) interacts with GTP. The short motif at 42–50 (SKPTIGVDF) is the Effector region element. Residues 68–72 (DTAGQ), 126–129 (NKSD), and 156–157 (SA) contribute to the GTP site. Residues Cys-226 and Cys-227 are each lipidated (S-geranylgeranyl cysteine).

The protein belongs to the small GTPase superfamily. Rab family.

The protein resides in the cell membrane. Its function is as follows. Intracellular vesicle trafficking and protein transport. In Arabidopsis thaliana (Mouse-ear cress), this protein is Ras-related protein RABA6b (RABA6B).